A 387-amino-acid chain; its full sequence is Fructose-1,6-bisphosphate aldolase/phosphatase (387 aa).

Residue aspartate 13 is the Proton acceptor; for FBP phosphatase activity of the active site. The Mg(2+) site is built by aspartate 13, histidine 20, aspartate 54, and aspartate 55. Beta-D-fructose 1,6-bisphosphate is bound at residue histidine 20. Histidine 20 contributes to the dihydroxyacetone phosphate binding site. Residue tyrosine 92 coordinates beta-D-fructose 1,6-bisphosphate. Glutamine 96 serves as a coordination point for Mg(2+). 105 to 106 (GN) contributes to the beta-D-fructose 1,6-bisphosphate binding site. Aspartate 133 serves as a coordination point for Mg(2+). Lysine 134 provides a ligand contact to beta-D-fructose 1,6-bisphosphate. Lysine 134 is a binding site for dihydroxyacetone phosphate. Residue tyrosine 229 is the Proton donor/acceptor; for FBP aldolase activity of the active site. Lysine 232, aspartate 233, and aspartate 234 together coordinate Mg(2+). Catalysis depends on lysine 232, which acts as the Schiff-base intermediate with DHAP; for FBP aldolase activity. Residues 242–243 (QS), arginine 266, aspartate 287, and tyrosine 348 contribute to the beta-D-fructose 1,6-bisphosphate site. The dihydroxyacetone phosphate site is built by arginine 266 and aspartate 287.

It belongs to the FBP aldolase/phosphatase family. In terms of assembly, homooctamer; dimer of tetramers. It depends on Mg(2+) as a cofactor.

The catalysed reaction is beta-D-fructose 1,6-bisphosphate + H2O = beta-D-fructose 6-phosphate + phosphate. It catalyses the reaction beta-D-fructose 1,6-bisphosphate = D-glyceraldehyde 3-phosphate + dihydroxyacetone phosphate. It participates in carbohydrate biosynthesis; gluconeogenesis. In terms of biological role, catalyzes two subsequent steps in gluconeogenesis: the aldol condensation of dihydroxyacetone phosphate (DHAP) and glyceraldehyde-3-phosphate (GA3P) to fructose-1,6-bisphosphate (FBP), and the dephosphorylation of FBP to fructose-6-phosphate (F6P). In Ignicoccus hospitalis (strain KIN4/I / DSM 18386 / JCM 14125), this protein is Fructose-1,6-bisphosphate aldolase/phosphatase.